The chain runs to 143 residues: Nucleoside diphosphate kinase (143 aa).

ATP-binding residues include K11, F59, R87, T93, R104, and N114. The Pros-phosphohistidine intermediate role is filled by H117.

It belongs to the NDK family. As to quaternary structure, homotetramer. Mg(2+) is required as a cofactor.

It is found in the cytoplasm. It catalyses the reaction a 2'-deoxyribonucleoside 5'-diphosphate + ATP = a 2'-deoxyribonucleoside 5'-triphosphate + ADP. The enzyme catalyses a ribonucleoside 5'-diphosphate + ATP = a ribonucleoside 5'-triphosphate + ADP. In terms of biological role, major role in the synthesis of nucleoside triphosphates other than ATP. The ATP gamma phosphate is transferred to the NDP beta phosphate via a ping-pong mechanism, using a phosphorylated active-site intermediate. This is Nucleoside diphosphate kinase from Ectopseudomonas mendocina (strain ymp) (Pseudomonas mendocina).